Consider the following 159-residue polypeptide: Putative ribosomal RNA large subunit methyltransferase H (159 aa).

S-adenosyl-L-methionine contacts are provided by residues L76, G108, and 127–132; that span reads FSKMTF.

Belongs to the RNA methyltransferase RlmH family.

It is found in the cytoplasm. It carries out the reaction pseudouridine(1915) in 23S rRNA + S-adenosyl-L-methionine = N(3)-methylpseudouridine(1915) in 23S rRNA + S-adenosyl-L-homocysteine + H(+). In terms of biological role, specifically methylates the pseudouridine at position 1915 (m3Psi1915) in 23S rRNA. This chain is Putative ribosomal RNA large subunit methyltransferase H, found in Methanococcus vannielii (strain ATCC 35089 / DSM 1224 / JCM 13029 / OCM 148 / SB).